Consider the following 290-residue polypeptide: Arylamine N-acetyltransferase, pineal gland isozyme NAT-10 (290 aa).

C68 (acyl-thioester intermediate) is an active-site residue. Residues H107 and D122 contribute to the active site.

Belongs to the arylamine N-acetyltransferase family.

The enzyme catalyses an arylamine + acetyl-CoA = an N-acetylarylamine + CoA. This Gallus gallus (Chicken) protein is Arylamine N-acetyltransferase, pineal gland isozyme NAT-10.